We begin with the raw amino-acid sequence, 219 residues long: dTTP/UTP pyrophosphatase (219 aa).

Aspartate 79 serves as the catalytic Proton acceptor.

This sequence belongs to the Maf family. YhdE subfamily. Requires a divalent metal cation as cofactor.

The protein resides in the cytoplasm. The enzyme catalyses dTTP + H2O = dTMP + diphosphate + H(+). The catalysed reaction is UTP + H2O = UMP + diphosphate + H(+). Nucleoside triphosphate pyrophosphatase that hydrolyzes dTTP and UTP. May have a dual role in cell division arrest and in preventing the incorporation of modified nucleotides into cellular nucleic acids. In Oleidesulfovibrio alaskensis (strain ATCC BAA-1058 / DSM 17464 / G20) (Desulfovibrio alaskensis), this protein is dTTP/UTP pyrophosphatase.